The following is a 671-amino-acid chain: Putative glycoside hydrolase BT_3595 (671 aa).

Residues 1-24 form the signal peptide; that stretch reads MITGIISILCYLQCFGTLSASVTA.

It belongs to the glycoside hydrolase-like 3 (GHL3) family.

This Bacteroides thetaiotaomicron (strain ATCC 29148 / DSM 2079 / JCM 5827 / CCUG 10774 / NCTC 10582 / VPI-5482 / E50) protein is Putative glycoside hydrolase BT_3595.